We begin with the raw amino-acid sequence, 336 residues long: Phosphate acyltransferase (336 aa).

Belongs to the PlsX family. In terms of assembly, homodimer. Probably interacts with PlsY.

The protein localises to the cytoplasm. It carries out the reaction a fatty acyl-[ACP] + phosphate = an acyl phosphate + holo-[ACP]. The protein operates within lipid metabolism; phospholipid metabolism. In terms of biological role, catalyzes the reversible formation of acyl-phosphate (acyl-PO(4)) from acyl-[acyl-carrier-protein] (acyl-ACP). This enzyme utilizes acyl-ACP as fatty acyl donor, but not acyl-CoA. In Pseudomonas aeruginosa (strain UCBPP-PA14), this protein is Phosphate acyltransferase.